The sequence spans 413 residues: Serine hydroxymethyltransferase (413 aa).

Residues leucine 115 and 119–121 (GHL) contribute to the (6S)-5,6,7,8-tetrahydrofolate site. Residue lysine 224 is modified to N6-(pyridoxal phosphate)lysine.

The protein belongs to the SHMT family. Homodimer. Pyridoxal 5'-phosphate serves as cofactor.

The protein resides in the cytoplasm. It carries out the reaction (6R)-5,10-methylene-5,6,7,8-tetrahydrofolate + glycine + H2O = (6S)-5,6,7,8-tetrahydrofolate + L-serine. Its pathway is one-carbon metabolism; tetrahydrofolate interconversion. It functions in the pathway amino-acid biosynthesis; glycine biosynthesis; glycine from L-serine: step 1/1. In terms of biological role, catalyzes the reversible interconversion of serine and glycine with tetrahydrofolate (THF) serving as the one-carbon carrier. This reaction serves as the major source of one-carbon groups required for the biosynthesis of purines, thymidylate, methionine, and other important biomolecules. Also exhibits THF-independent aldolase activity toward beta-hydroxyamino acids, producing glycine and aldehydes, via a retro-aldol mechanism. The protein is Serine hydroxymethyltransferase of Mycoplasma capricolum subsp. capricolum (strain California kid / ATCC 27343 / NCTC 10154).